A 204-amino-acid chain; its full sequence is Ras-related protein Rab-7L1 (204 aa).

Residues S33, K34, H35, Y36, K37, and T39 each coordinate GTP. The Effector region signature appears at 36–44 (YKSTVGVDF). T71 is modified (phosphothreonine; by LRRK2). Phosphoserine is present on S72. K126, V156, and K157 together coordinate GTP. Residues C203 and C204 are each lipidated (S-geranylgeranyl cysteine).

Belongs to the small GTPase superfamily. Rab family. In terms of assembly, interacts with LRRK2 (via the N-terminus); this interaction is direct and stimulates kinase activity. Expressed predominantly in kidney and much less in brain, heart, muscle, fat, liver, spleen, adrenal gland, ovary, thymus and lung. Not expressed in testis and intestine.

The protein resides in the cell membrane. It is found in the cytoplasm. It localises to the perinuclear region. The protein localises to the golgi apparatus. Its subcellular location is the golgi apparatus membrane. The protein resides in the trans-Golgi network. It is found in the cytoskeleton. In terms of biological role, the small GTPases Rab are key regulators in vesicle trafficking. Essential for maintaining the integrity of endosome-trans-Golgi network structure. Together with LRRK2, plays a role in the retrograde trafficking pathway for recycling proteins, such as mannose 6 phosphate receptor (M6PR), between lysosomes and the Golgi apparatus in a retromer-dependent manner. Recruits LRRK2 to the Golgi apparatus and stimulates LRRK2 kinase activity. Stimulates phosphorylation of RAB10 'Thr-73' by LRRK2. Regulates also neuronal process morphology in the intact central nervous system (CNS). This is Ras-related protein Rab-7L1 (Rab29) from Rattus norvegicus (Rat).